A 247-amino-acid chain; its full sequence is Putative ankyrin repeat protein RBE_1110 (247 aa).

ANK repeat units lie at residues 105-135 and 139-171; these read QNKD…CIDY and EGHN…KLIT.

The protein is Putative ankyrin repeat protein RBE_1110 of Rickettsia bellii (strain RML369-C).